The sequence spans 251 residues: Ubiquitin-conjugating enzyme E2 6 (251 aa).

Residues 1–229 (MASIQANKRL…DQDKNPGENS (229 aa)) lie on the Cytoplasmic side of the membrane. Residues 5–154 (QANKRLTKEY…YSNFKFKNMF (150 aa)) form the UBC core domain. Catalysis depends on Cys-87, which acts as the Glycyl thioester intermediate. The segment covering 173-185 (AESKGAQQEENKA) has biased composition (basic and acidic residues). Residues 173 to 200 (AESKGAQQEENKAQKLATEKATSLDDIS) are disordered. A helical transmembrane segment spans residues 230–250 (NIKSLLCLILAIAIFFVGLIM).

This sequence belongs to the ubiquitin-conjugating enzyme family.

It is found in the endoplasmic reticulum membrane. The enzyme catalyses S-ubiquitinyl-[E1 ubiquitin-activating enzyme]-L-cysteine + [E2 ubiquitin-conjugating enzyme]-L-cysteine = [E1 ubiquitin-activating enzyme]-L-cysteine + S-ubiquitinyl-[E2 ubiquitin-conjugating enzyme]-L-cysteine.. The protein operates within protein modification; protein ubiquitination. Functionally, catalyzes the covalent attachment of ubiquitin to other proteins. Functions in degradation of misfolded or regulated proteins localized in the endoplasmic reticulum (ER) lumen or membrane via the ubiquitin-proteasome system. Cognate E2 conjugating enzyme for the DOA10 ubiquitin ligase complex, which is part of the ERAD-C pathway responsible for the rapid degradation of membrane proteins with misfolded cytoplasmic domains. In Kluyveromyces lactis (strain ATCC 8585 / CBS 2359 / DSM 70799 / NBRC 1267 / NRRL Y-1140 / WM37) (Yeast), this protein is Ubiquitin-conjugating enzyme E2 6 (UBC6).